Reading from the N-terminus, the 338-residue chain is Acetylcholinesterase (338 aa).

Residue asparagine 8 is glycosylated (N-linked (GlcNAc...) asparagine). Serine 99 functions as the Acyl-ester intermediate in the catalytic mechanism. Cysteine 153 and cysteine 164 form a disulfide bridge. Residue glutamate 226 is the Charge relay system of the active site.

This sequence belongs to the type-B carboxylesterase/lipase family.

The protein localises to the synapse. It is found in the secreted. It localises to the cell membrane. It catalyses the reaction acetylcholine + H2O = choline + acetate + H(+). Its function is as follows. Terminates signal transduction at the neuromuscular junction by rapid hydrolysis of the acetylcholine released into the synaptic cleft. In Myxine glutinosa (Atlantic hagfish), this protein is Acetylcholinesterase (ache).